We begin with the raw amino-acid sequence, 325 residues long: Ribonucleoside-diphosphate reductase subunit beta (325 aa).

3 residues coordinate Fe cation: aspartate 73, glutamate 104, and histidine 107. Tyrosine 111 is a catalytic residue. Residues glutamate 164, glutamate 198, and histidine 201 each coordinate Fe cation.

This sequence belongs to the ribonucleoside diphosphate reductase small chain family. In terms of assembly, tetramer of two alpha and two beta subunits. Fe cation serves as cofactor.

It catalyses the reaction a 2'-deoxyribonucleoside 5'-diphosphate + [thioredoxin]-disulfide + H2O = a ribonucleoside 5'-diphosphate + [thioredoxin]-dithiol. Functionally, provides the precursors necessary for DNA synthesis. Catalyzes the biosynthesis of deoxyribonucleotides from the corresponding ribonucleotides. The sequence is that of Ribonucleoside-diphosphate reductase subunit beta (nrdF) from Mycobacterium leprae (strain TN).